A 115-amino-acid polypeptide reads, in one-letter code: Potassium-transporting ATPase potassium-binding subunit (115 aa).

Transmembrane regions (helical) follow at residues 8 to 28 (YFLL…VAFF) and 60 to 80 (SYCT…YGLL).

It belongs to the KdpA family. As to quaternary structure, the system is composed of three essential subunits: KdpA, KdpB and KdpC.

The protein resides in the cell membrane. In terms of biological role, part of the high-affinity ATP-driven potassium transport (or Kdp) system, which catalyzes the hydrolysis of ATP coupled with the electrogenic transport of potassium into the cytoplasm. This subunit binds the extracellular potassium ions and delivers the ions to the membrane domain of KdpB through an intramembrane tunnel. The chain is Potassium-transporting ATPase potassium-binding subunit from Geobacillus stearothermophilus (Bacillus stearothermophilus).